The following is a 653-amino-acid chain: 4-alpha-glucanotransferase (653 aa).

Glu123 functions as the Nucleophile in the catalytic mechanism. The active-site Proton donor is Asp214.

This sequence belongs to the glycosyl hydrolase 57 family.

The enzyme catalyses Transfers a segment of a (1-&gt;4)-alpha-D-glucan to a new position in an acceptor, which may be glucose or a (1-&gt;4)-alpha-D-glucan.. In Thermococcus kodakarensis (strain ATCC BAA-918 / JCM 12380 / KOD1) (Pyrococcus kodakaraensis (strain KOD1)), this protein is 4-alpha-glucanotransferase.